The chain runs to 35 residues: Tau-theraphotoxin-Pc1b (35 aa).

Intrachain disulfides connect C3–C17, C10–C22, and C16–C29. F35 bears the Phenylalanine amide mark.

This sequence belongs to the neurotoxin 10 (Hwtx-1) family. 62 (Vatx) subfamily. As to expression, expressed by the venom gland.

It is found in the secreted. Selectively activates the mammalian capsaicin receptor TRPV1, a non-selective cation channel expressed by sensory neurons of the pain pathway. Is more potent than VaTx1, but less potent than VaTx3. Interacts with distinct regions of the channel than capsaicin, since it only acts on the extracellular face of the channel, and capsaicin binds to the cytosolic side. Also activates avian TRPV1, which is insensitive to capsaicin. Produce weak inhibition on potassium channels Kv2.1/KCNB1. The sequence is that of Tau-theraphotoxin-Pc1b from Psalmopoeus cambridgei (Trinidad chevron tarantula).